The chain runs to 951 residues: Glycine dehydrogenase (decarboxylating) (951 aa).

Lysine 709 carries the post-translational modification N6-(pyridoxal phosphate)lysine.

The protein belongs to the GcvP family. As to quaternary structure, the glycine cleavage system is composed of four proteins: P, T, L and H. The cofactor is pyridoxal 5'-phosphate.

It carries out the reaction N(6)-[(R)-lipoyl]-L-lysyl-[glycine-cleavage complex H protein] + glycine + H(+) = N(6)-[(R)-S(8)-aminomethyldihydrolipoyl]-L-lysyl-[glycine-cleavage complex H protein] + CO2. The glycine cleavage system catalyzes the degradation of glycine. The P protein binds the alpha-amino group of glycine through its pyridoxal phosphate cofactor; CO(2) is released and the remaining methylamine moiety is then transferred to the lipoamide cofactor of the H protein. This chain is Glycine dehydrogenase (decarboxylating), found in Gluconobacter oxydans (strain 621H) (Gluconobacter suboxydans).